Consider the following 431-residue polypeptide: Glucose-1-phosphate adenylyltransferase (431 aa).

A beta-D-fructose 1,6-bisphosphate-binding site is contributed by Lys-39. Residues Arg-40, His-46, and Arg-52 each contribute to the AMP site. Alpha-D-glucose 1-phosphate is bound at residue Tyr-114. Arg-130 provides a ligand contact to AMP. Alpha-D-glucose 1-phosphate contacts are provided by residues Gly-179, 194–195, and Ser-212; that span reads EK. Positions 370 and 386 each coordinate AMP. Beta-D-fructose 1,6-bisphosphate-binding positions include 419-423 and 429-431; these read REMLR and QER.

It belongs to the bacterial/plant glucose-1-phosphate adenylyltransferase family. In terms of assembly, homotetramer.

The enzyme catalyses alpha-D-glucose 1-phosphate + ATP + H(+) = ADP-alpha-D-glucose + diphosphate. It participates in glycan biosynthesis; glycogen biosynthesis. With respect to regulation, allosterically activated by fructose-1,6-bisphosphate (F16BP) and inhibited by AMP. Functionally, involved in the biosynthesis of ADP-glucose, a building block required for the elongation reactions to produce glycogen. Catalyzes the reaction between ATP and alpha-D-glucose 1-phosphate (G1P) to produce pyrophosphate and ADP-Glc. In Escherichia coli O127:H6 (strain E2348/69 / EPEC), this protein is Glucose-1-phosphate adenylyltransferase.